We begin with the raw amino-acid sequence, 540 residues long: T-complex protein 1 subunit delta (540 aa).

A compositionally biased stretch (low complexity) spans 1–12; that stretch reads MPPAVPAAAATA. Residues 1-32 are disordered; that stretch reads MPPAVPAAAATARQSASGRERNFKDKDKPESV. Basic and acidic residues predominate over residues 18-31; that stretch reads GRERNFKDKDKPES.

Belongs to the TCP-1 chaperonin family. In terms of assembly, heterooligomeric complex of about 850 to 900 kDa that forms two stacked rings, 12 to 16 nm in diameter.

Its subcellular location is the cytoplasm. Functionally, molecular chaperone; assists the folding of proteins upon ATP hydrolysis. Known to play a role, in vitro, in the folding of actin and tubulin. The polypeptide is T-complex protein 1 subunit delta (cct-4) (Caenorhabditis elegans).